The primary structure comprises 175 residues: Small ribosomal subunit protein uS5 (175 aa).

The S5 DRBM domain occupies 19-82 (WQERVIQIRR…ADGKKHLIDI (64 aa)).

This sequence belongs to the universal ribosomal protein uS5 family. In terms of assembly, part of the 30S ribosomal subunit. Contacts proteins S4 and S8.

In terms of biological role, with S4 and S12 plays an important role in translational accuracy. Located at the back of the 30S subunit body where it stabilizes the conformation of the head with respect to the body. In Nostoc punctiforme (strain ATCC 29133 / PCC 73102), this protein is Small ribosomal subunit protein uS5.